Reading from the N-terminus, the 880-residue chain is Leucine-rich repeat-containing protein 66 (880 aa).

Residues 4–24 traverse the membrane as a helical segment; that stretch reads LYFRVITIVIGLYFTGIMTNA. Asn45 carries N-linked (GlcNAc...) asparagine glycosylation. 6 LRR repeats span residues 86 to 107, 110 to 130, 149 to 171, 172 to 193, 196 to 217, and 220 to 241; these read KIKH…PFAY, ALEV…DLLS, LLKV…WKLK, SLQS…DFHN, QLEN…AFKD, and KLQV…MIIA. A glycan (N-linked (GlcNAc...) asparagine) is linked at Asn115. Residues 319–368 are disordered; it reads SKAERPQGGRHTGISTLGKKAKAGSGLRKKQRRLPRSVRSTRDVQAAGKK. Residues 337 to 354 show a composition bias toward basic residues; that stretch reads KKAKAGSGLRKKQRRLPR. Residues 376-396 traverse the membrane as a helical segment; sequence ALAVCLSVFITFLVAFSLGAF. 2 disordered regions span residues 463 to 504 and 679 to 746; these read PHPH…NDGA and VTPA…SKDN. The span at 483 to 493 shows a compositional bias: polar residues; sequence GSSQSPGQCGD. The segment covering 697-707 has biased composition (acidic residues); the sequence is CELESDCDSDE. Over residues 709-720 the composition is skewed to low complexity; it reads SLFTLSSISSES. Ser723 carries the post-translational modification Phosphoserine. The segment covering 737–746 has biased composition (polar residues); it reads DESSGASKDN. N-linked (GlcNAc...) asparagine glycosylation occurs at Asn746. Ser752 is modified (phosphoserine). Asn756 carries N-linked (GlcNAc...) asparagine glycosylation. Disordered regions lie at residues 764-816 and 855-880; these read GKCK…PLGD and TPPC…DILK. Basic and acidic residues-rich tracts occupy residues 788 to 800 and 865 to 880; these read THLE…DRSE and DPDK…DILK.

The protein localises to the membrane. The chain is Leucine-rich repeat-containing protein 66 (LRRC66) from Homo sapiens (Human).